A 240-amino-acid polypeptide reads, in one-letter code: Zinc import ATP-binding protein ZnuC (240 aa).

Positions 1–219 (MSLLSIAALD…PAYRAMFGLD (219 aa)) constitute an ABC transporter domain. 36-43 (GPNGSGKT) provides a ligand contact to ATP.

This sequence belongs to the ABC transporter superfamily. Zinc importer (TC 3.A.1.15.5) family. The complex is composed of two ATP-binding proteins (ZnuC), two transmembrane proteins (ZnuB) and a solute-binding protein (ZnuA).

It localises to the cell inner membrane. It catalyses the reaction Zn(2+)(out) + ATP(in) + H2O(in) = Zn(2+)(in) + ADP(in) + phosphate(in) + H(+)(in). Its function is as follows. Part of the ABC transporter complex ZnuABC involved in zinc import. Responsible for energy coupling to the transport system. This chain is Zinc import ATP-binding protein ZnuC, found in Chromohalobacter salexigens (strain ATCC BAA-138 / DSM 3043 / CIP 106854 / NCIMB 13768 / 1H11).